The primary structure comprises 216 residues: Small ribosomal subunit protein eS6 (216 aa).

It belongs to the eukaryotic ribosomal protein eS6 family.

This Staphylothermus marinus (strain ATCC 43588 / DSM 3639 / JCM 9404 / F1) protein is Small ribosomal subunit protein eS6.